The sequence spans 138 residues: Ribonuclease VapC21 (138 aa).

Residues 6–128 (LLDKSAAYRA…ERIAAITRQP (123 aa)) enclose the PINc domain. Positions 8 and 97 each coordinate Mg(2+).

Belongs to the PINc/VapC protein family. Mg(2+) is required as a cofactor.

Toxic component of a type II toxin-antitoxin (TA) system. An RNase. Its toxic effect is neutralized by coexpression with cognate antitoxin VapB21. The chain is Ribonuclease VapC21 from Mycobacterium tuberculosis (strain CDC 1551 / Oshkosh).